Reading from the N-terminus, the 58-residue chain is NADH dehydrogenase [ubiquinone] 1 beta subcomplex subunit 1 (58 aa).

Residues 11 to 27 traverse the membrane as a helical segment; sequence HWVHVLVPMGFVIGCYL.

It belongs to the complex I NDUFB1 subunit family. As to quaternary structure, complex I is composed of 45 different subunits.

The protein resides in the mitochondrion inner membrane. Its function is as follows. Accessory subunit of the mitochondrial membrane respiratory chain NADH dehydrogenase (Complex I) that is believed not to be involved in catalysis. Complex I functions in the transfer of electrons from NADH to the respiratory chain. The immediate electron acceptor for the enzyme is believed to be ubiquinone. In Homo sapiens (Human), this protein is NADH dehydrogenase [ubiquinone] 1 beta subcomplex subunit 1 (NDUFB1).